Reading from the N-terminus, the 583-residue chain is MVRHADTPTDAQRAREQFLSTGALQPDAVASSVLNSWQRSRELHVHPDRVELPYVRDPDTDTPLMHAAAPVLRRMAEDLSDQSVSVVLTSADGLVLDRVAADTEFERVLDDVRLARGYSYAEEFAGTNGIGTALETGRPAFIRGSEHYVGTLGGLACAGSPIREPVTRRILGVIDLTCRARQADPLLFVLAKSAGSQIEDRLRTMNNETETALLDAYLKQSRRYPGGVLAIGGDVVLMNRYLRQALDAADQTVLLDHAAELTRSSFTSTTVAHLPSGASVKISAAERIIVGVRSDSVVFHVSVHVAESIPVRSSQHIPRLAGQSSSFRRSAQQVERCYRDREWVVIEGERGSGRTYLGYSVVHFVTPERSIPVLHIDNFDTPESFVAAFESETDSADFAVIVSDVDELPDEVLNPMAAIMQTRAGRGWIAATTSTERDSQLVDLLMLPFFTHTVTVPALRHRIEDLQELVPMILNELSRGEARMDGEAMRQLAKLPWPGNIAQLRHVLTETVRRQRSGVIGVDKLPAECRSVTRRKLTPLEAMERDAIVRSLLENDGNKADAAAALGMSRATIYRKIKDFGIA.

The Sigma-54 factor interaction domain occupies 320–513 (LAGQSSSFRR…LRHVLTETVR (194 aa)). Residues 349–356 (ERGSGRTY) and 395–404 (SADFAVIVSD) each bind ATP.

Its function is as follows. Acts as a transcriptional activator of the mimABCD operon encoding the propane 2-monooxygenase complex. In Mycolicibacterium smegmatis (strain ATCC 700084 / mc(2)155) (Mycobacterium smegmatis), this protein is Propane 2-monooxygenase operon transcriptional activator MimR.